The sequence spans 430 residues: Adenylosuccinate synthetase (430 aa).

GTP-binding positions include 12–18 and 40–42; these read GDEGKGK and GHT. The Proton acceptor role is filled by aspartate 13. Aspartate 13 and glycine 40 together coordinate Mg(2+). IMP contacts are provided by residues 13–16, 38–41, threonine 130, arginine 144, glutamine 224, threonine 239, and arginine 303; these read DEGK and NAGH. The Proton donor role is filled by histidine 41. A substrate-binding site is contributed by 299 to 305; that stretch reads VNTGRKR. Residues arginine 305, 331-333, and 413-415 contribute to the GTP site; these read KLD and STS.

Belongs to the adenylosuccinate synthetase family. Homodimer. Requires Mg(2+) as cofactor.

It localises to the cytoplasm. It catalyses the reaction IMP + L-aspartate + GTP = N(6)-(1,2-dicarboxyethyl)-AMP + GDP + phosphate + 2 H(+). It participates in purine metabolism; AMP biosynthesis via de novo pathway; AMP from IMP: step 1/2. In terms of biological role, plays an important role in the de novo pathway of purine nucleotide biosynthesis. Catalyzes the first committed step in the biosynthesis of AMP from IMP. In Rhodopseudomonas palustris (strain BisA53), this protein is Adenylosuccinate synthetase.